The following is a 346-amino-acid chain: N-acetyl-gamma-glutamyl-phosphate reductase (346 aa).

Cys151 is a catalytic residue.

It belongs to the NAGSA dehydrogenase family. Type 1 subfamily.

The protein localises to the cytoplasm. It catalyses the reaction N-acetyl-L-glutamate 5-semialdehyde + phosphate + NADP(+) = N-acetyl-L-glutamyl 5-phosphate + NADPH + H(+). It functions in the pathway amino-acid biosynthesis; L-arginine biosynthesis; N(2)-acetyl-L-ornithine from L-glutamate: step 3/4. Its function is as follows. Catalyzes the NADPH-dependent reduction of N-acetyl-5-glutamyl phosphate to yield N-acetyl-L-glutamate 5-semialdehyde. The sequence is that of N-acetyl-gamma-glutamyl-phosphate reductase from Ehrlichia chaffeensis (strain ATCC CRL-10679 / Arkansas).